A 483-amino-acid chain; its full sequence is FK506-binding protein 4 (483 aa).

Disordered regions lie at residues 41-171 (TAEP…EEFV) and 208-371 (TGNY…LKKP). The segment covering 68–93 (EEDDDEYLDIDGEDSEDDEESDDEEV) has biased composition (acidic residues). Composition is skewed to basic and acidic residues over residues 108 to 121 (REAA…ATKE) and 130 to 150 (ADAK…KASE). Composition is skewed to acidic residues over residues 151–167 (SDDE…EPNF), 216–233 (GQDE…DEEY), and 241–256 (LESD…DEID). Basic and acidic residues-rich tracts occupy residues 298 to 309 (LVAKDKKQAEKQ), 323 to 344 (ENKD…KDLE), and 351 to 370 (AKDK…DLKK). One can recognise a PPIase FKBP-type domain in the interval 397–483 (GDRVSLRYIG…VFDIKLLEIK (87 aa)).

Belongs to the FKBP-type PPIase family. FKBP3/4 subfamily. In terms of assembly, binds to histones H3 and H4.

Its subcellular location is the nucleus. The enzyme catalyses [protein]-peptidylproline (omega=180) = [protein]-peptidylproline (omega=0). Functionally, PPIase that acts as a histone chaperone. Histone proline isomerase that increases the rate of cis-trans isomerization at prolines on the histone H3 N-terminal tail. Proline isomerization influences H3 methylation thereby regulating gene expression. The polypeptide is FK506-binding protein 4 (FPR4) (Chaetomium thermophilum (strain DSM 1495 / CBS 144.50 / IMI 039719) (Thermochaetoides thermophila)).